The following is a 252-amino-acid chain: Methionine aminopeptidase (252 aa).

A substrate-binding site is contributed by His76. 3 residues coordinate a divalent metal cation: Asp93, Asp104, and His168. Residue His175 coordinates substrate. A divalent metal cation-binding residues include Glu202 and Glu233.

It belongs to the peptidase M24A family. Methionine aminopeptidase type 1 subfamily. As to quaternary structure, monomer. Co(2+) serves as cofactor. Zn(2+) is required as a cofactor. Requires Mn(2+) as cofactor. It depends on Fe(2+) as a cofactor.

The enzyme catalyses Release of N-terminal amino acids, preferentially methionine, from peptides and arylamides.. In terms of biological role, removes the N-terminal methionine from nascent proteins. The N-terminal methionine is often cleaved when the second residue in the primary sequence is small and uncharged (Met-Ala-, Cys, Gly, Pro, Ser, Thr, or Val). Requires deformylation of the N(alpha)-formylated initiator methionine before it can be hydrolyzed. This is Methionine aminopeptidase from Staphylococcus aureus (strain MRSA252).